The chain runs to 811 residues: Bifunctional enzyme MurC/Ddl (811 aa).

The tract at residues 1-450 (MNRKNHYHFI…GNALKDFEPK (450 aa)) is UDP-N-acetylmuramate--alanine ligase. ATP contacts are provided by residues 111-117 (GSHGKTT) and 607-662 (LETF…SREI). Residues 451–811 (KLSVGVVCGG…NKQCLLTAKS (361 aa)) form a D-alanine--D-alanine ligase region. Positions 574–785 (KRLAASVGVP…FEQIVHQLII (212 aa)) constitute an ATP-grasp domain. Residues D739, E752, and N754 each contribute to the Mg(2+) site.

This sequence in the N-terminal section; belongs to the MurCDEF family. The protein in the C-terminal section; belongs to the D-alanine--D-alanine ligase family. The cofactor is Mg(2+). Mn(2+) serves as cofactor.

It is found in the cytoplasm. It carries out the reaction UDP-N-acetyl-alpha-D-muramate + L-alanine + ATP = UDP-N-acetyl-alpha-D-muramoyl-L-alanine + ADP + phosphate + H(+). It catalyses the reaction 2 D-alanine + ATP = D-alanyl-D-alanine + ADP + phosphate + H(+). Its pathway is cell wall biogenesis; peptidoglycan biosynthesis. The sequence is that of Bifunctional enzyme MurC/Ddl (murC/ddlA) from Chlamydia caviae (strain ATCC VR-813 / DSM 19441 / 03DC25 / GPIC) (Chlamydophila caviae).